Here is a 708-residue protein sequence, read N- to C-terminus: Leucine-rich repeat neuronal protein 3 (708 aa).

The first 22 residues, 1 to 22, serve as a signal peptide directing secretion; that stretch reads MKDMPLQIHVLLGLAITTLVQA. An LRRNT domain is found at 23 to 69; it reads VDKKVDCPQLCTCEIRPWFTPTSIYMEASTVDCNDLGLLTFPARLPA. The Extracellular portion of the chain corresponds to 23 to 628; it reads VDKKVDCPQL…KEYEKSNTTT (606 aa). LRR repeat units follow at residues 70 to 91, 93 to 114, 117 to 138, 141 to 162, 165 to 186, 189 to 210, 213 to 234, 237 to 258, 261 to 282, 285 to 304, 310 to 332, and 335 to 358; these read NTQI…TDFP, NLTG…NVKK, QLLS…CLSE, NLQE…AFIG, NLLR…WFDA, NLEI…NFKP, NLRS…ALVG, NLES…ALQK, NLKF…DFSN, HLKE…DSLA, DLRK…AFFR, and KLES…ESLP. N-linked (GlcNAc...) asparagine glycosylation is found at Asn93 and Asn103. Asn223 carries N-linked (GlcNAc...) asparagine glycosylation. The LRRCT domain occupies 368–421; that stretch reads NPIRCDCVIRWINMNKTNIRFMEPDSLFCVDPPEFQGQNVRQVHFRDMMEICLP. An N-linked (GlcNAc...) asparagine glycan is attached at Asn382. Residues 421–514 enclose the Ig-like C2-type domain; that stretch reads PLIAPESFPS…DLKSVMIKVD (94 aa). Cys444 and Cys496 are joined by a disulfide. Asn522, Asn579, Asn608, and Asn625 each carry an N-linked (GlcNAc...) asparagine glycan. Residues 523–617 enclose the Fibronectin type-III domain; that stretch reads GSLNIKIRDI…NVTTKGLDPD (95 aa). A helical transmembrane segment spans residues 629–649; that stretch reads LMACLGGLLGIIGVICLISCL. Residues 650 to 708 are Cytoplasmic-facing; sequence SPEMNCDGGHSYVRNYLQKPTFALGELYPPLINLWEAGKEKSTSLKVKATVIGLPTNMS.

It localises to the membrane. The chain is Leucine-rich repeat neuronal protein 3 (LRRN3) from Pongo abelii (Sumatran orangutan).